We begin with the raw amino-acid sequence, 372 residues long: UDP-N-acetylglucosamine--N-acetylmuramyl-(pentapeptide) pyrophosphoryl-undecaprenol N-acetylglucosamine transferase (372 aa).

Residues 16–18 (TGG), Asn-128, Arg-164, Ser-192, Ile-250, and Gln-295 contribute to the UDP-N-acetyl-alpha-D-glucosamine site.

This sequence belongs to the glycosyltransferase 28 family. MurG subfamily.

Its subcellular location is the cell inner membrane. It catalyses the reaction di-trans,octa-cis-undecaprenyl diphospho-N-acetyl-alpha-D-muramoyl-L-alanyl-D-glutamyl-meso-2,6-diaminopimeloyl-D-alanyl-D-alanine + UDP-N-acetyl-alpha-D-glucosamine = di-trans,octa-cis-undecaprenyl diphospho-[N-acetyl-alpha-D-glucosaminyl-(1-&gt;4)]-N-acetyl-alpha-D-muramoyl-L-alanyl-D-glutamyl-meso-2,6-diaminopimeloyl-D-alanyl-D-alanine + UDP + H(+). Its pathway is cell wall biogenesis; peptidoglycan biosynthesis. Cell wall formation. Catalyzes the transfer of a GlcNAc subunit on undecaprenyl-pyrophosphoryl-MurNAc-pentapeptide (lipid intermediate I) to form undecaprenyl-pyrophosphoryl-MurNAc-(pentapeptide)GlcNAc (lipid intermediate II). In Paraburkholderia xenovorans (strain LB400), this protein is UDP-N-acetylglucosamine--N-acetylmuramyl-(pentapeptide) pyrophosphoryl-undecaprenol N-acetylglucosamine transferase.